The following is a 279-amino-acid chain: Diaminopimelate epimerase (279 aa).

Substrate-binding residues include Asn13, Gln46, and Asn66. Catalysis depends on Cys75, which acts as the Proton donor. Residues 76–77 (GN), Asn161, Asn194, and 212–213 (ER) each bind substrate. Cys221 acts as the Proton acceptor in catalysis. Residue 222–223 (GT) coordinates substrate.

This sequence belongs to the diaminopimelate epimerase family. In terms of assembly, homodimer.

Its subcellular location is the cytoplasm. The enzyme catalyses (2S,6S)-2,6-diaminopimelate = meso-2,6-diaminopimelate. It participates in amino-acid biosynthesis; L-lysine biosynthesis via DAP pathway; DL-2,6-diaminopimelate from LL-2,6-diaminopimelate: step 1/1. Functionally, catalyzes the stereoinversion of LL-2,6-diaminopimelate (L,L-DAP) to meso-diaminopimelate (meso-DAP), a precursor of L-lysine and an essential component of the bacterial peptidoglycan. The sequence is that of Diaminopimelate epimerase from Alkalilimnicola ehrlichii (strain ATCC BAA-1101 / DSM 17681 / MLHE-1).